Reading from the N-terminus, the 237-residue chain is Zinc finger AN1 domain-containing stress-associated protein 14 (237 aa).

The interval 1–31 is disordered; the sequence is MATKRKCPANGDDGGVADLEPVAGGSFASPP. The AN1-type zinc finger occupies 171 to 217; sequence QPEANRCATCRRKVGLTGFKCRCGGTFCGGHRYADEHGCGFDYKSSG. Residues C177, C180, C191, C193, C198, H201, H207, and C209 each coordinate Zn(2+).

In terms of biological role, may be involved in environmental stress response. The sequence is that of Zinc finger AN1 domain-containing stress-associated protein 14 (SAP14) from Oryza sativa subsp. japonica (Rice).